The sequence spans 503 residues: T-complex protein 11 homolog (503 aa).

Basic and acidic residues predominate over residues 1–22 (MPDVKESVPPKYPGDSEGRSCK). Disordered stretches follow at residues 1 to 42 (MPDV…PPPF) and 254 to 285 (DLTM…NPEP). The segment covering 263-285 (PDTSDSSSVAGPSPNEAANNPEP) has biased composition (low complexity). Residues 330–349 (LTVMASVLLVASSFSGSVLF) form a helical membrane-spanning segment.

It belongs to the TCP11 family. Found in a complex at least composed of MROH2B, PRKACA isoform 2 and TCP11. Interacts with MROH2B. Interacts with PRKACA isoform 2. Isoform 2 and isoform 3 interact with ODF1 (via leucine zipper motif). In terms of processing, constitutively phosphorylated on serine, threonine and tyrosine residues within the head and tail regions of noncapacitated spermatozoa. Phosphorylation on tyrosine residues increases upon sperm capacitation within the acrosomal region in a protein kinase A (PKA)-dependent signaling pathway. As to expression, isoform 2 and isoform 3 are expressed in sperm. Isoform 1 is not detected in sperm (at protein level). Testis-specific. Isoform 1, isoform 2 and isoform 3 are expressed in sperm.

The protein localises to the membrane. Its subcellular location is the cell projection. The protein resides in the cilium. It localises to the flagellum. It is found in the cytoplasmic vesicle. The protein localises to the secretory vesicle. Its subcellular location is the acrosome. Functionally, plays a role in the process of sperm capacitation and acrosome reactions. Probable receptor for the putative fertilization-promoting peptide (FPP) at the sperm membrane that may modulate the activity of the adenylyl cyclase cAMP pathway. This Homo sapiens (Human) protein is T-complex protein 11 homolog (TCP11).